The sequence spans 235 residues: Small ribosomal subunit protein uS2c (235 aa).

The protein belongs to the universal ribosomal protein uS2 family.

It localises to the plastid. It is found in the chloroplast. The sequence is that of Small ribosomal subunit protein uS2c (rps2) from Anthoceros angustus (Hornwort).